A 425-amino-acid chain; its full sequence is Serine hydroxymethyltransferase (425 aa).

Residues leucine 126 and 130–132 (GHL) contribute to the (6S)-5,6,7,8-tetrahydrofolate site. An N6-(pyridoxal phosphate)lysine modification is found at lysine 234.

It belongs to the SHMT family. As to quaternary structure, homodimer. Requires pyridoxal 5'-phosphate as cofactor.

The protein localises to the cytoplasm. It carries out the reaction (6R)-5,10-methylene-5,6,7,8-tetrahydrofolate + glycine + H2O = (6S)-5,6,7,8-tetrahydrofolate + L-serine. It functions in the pathway one-carbon metabolism; tetrahydrofolate interconversion. The protein operates within amino-acid biosynthesis; glycine biosynthesis; glycine from L-serine: step 1/1. Catalyzes the reversible interconversion of serine and glycine with tetrahydrofolate (THF) serving as the one-carbon carrier. This reaction serves as the major source of one-carbon groups required for the biosynthesis of purines, thymidylate, methionine, and other important biomolecules. Also exhibits THF-independent aldolase activity toward beta-hydroxyamino acids, producing glycine and aldehydes, via a retro-aldol mechanism. This is Serine hydroxymethyltransferase from Desulfotalea psychrophila (strain LSv54 / DSM 12343).